The chain runs to 253 residues: uncharacterized protein (253 aa).

The signal sequence occupies residues 1–19 (MHYLKKVTIYISLLILVSG). A lipid anchor (N-palmitoyl cysteine) is attached at cysteine 20. The S-diacylglycerol cysteine moiety is linked to residue cysteine 20.

This sequence belongs to the staphylococcal tandem lipoprotein family.

The protein resides in the cell membrane. This is an uncharacterized protein from Staphylococcus epidermidis (strain ATCC 35984 / DSM 28319 / BCRC 17069 / CCUG 31568 / BM 3577 / RP62A).